The following is a 439-amino-acid chain: D-inositol 3-phosphate glycosyltransferase (439 aa).

His21 contacts 1D-myo-inositol 3-phosphate. UDP-N-acetyl-alpha-D-glucosamine-binding positions include 27-28 (QP) and Gly35. 1D-myo-inositol 3-phosphate is bound by residues 32–37 (DAGGMN), Lys90, Tyr123, Thr147, and Arg167. UDP-N-acetyl-alpha-D-glucosamine contacts are provided by Arg241, Lys246, and Gln299. The Mg(2+) site is built by Tyr308, Arg309, and Ala311. Glu321 and Glu329 together coordinate UDP-N-acetyl-alpha-D-glucosamine. Mg(2+) is bound at residue Thr335.

Belongs to the glycosyltransferase group 1 family. MshA subfamily. Homodimer.

The enzyme catalyses 1D-myo-inositol 3-phosphate + UDP-N-acetyl-alpha-D-glucosamine = 1D-myo-inositol 2-acetamido-2-deoxy-alpha-D-glucopyranoside 3-phosphate + UDP + H(+). Catalyzes the transfer of a N-acetyl-glucosamine moiety to 1D-myo-inositol 3-phosphate to produce 1D-myo-inositol 2-acetamido-2-deoxy-glucopyranoside 3-phosphate in the mycothiol biosynthesis pathway. This is D-inositol 3-phosphate glycosyltransferase from Mycobacterium sp. (strain JLS).